A 1298-amino-acid chain; its full sequence is Phosphoribosylformylglycinamidine synthase (1298 aa).

The interval 303-327 (FPGAATGSGGEIRDEGATGRGAKPK) is disordered. ATP is bound by residues 305–316 (GAATGSGGEIRD), 384–386 (TGY), and Ala676. Mg(2+)-binding residues include Asp677, Glu716, Asn720, and Asp884. Ser886 serves as a coordination point for ATP. The Glutamine amidotransferase type-1 domain occupies 1045-1298 (VAVLREQGVN…MFRNARAWVN (254 aa)). The active-site Nucleophile is Cys1138. Catalysis depends on residues His1263 and Glu1265.

It in the N-terminal section; belongs to the FGAMS family. As to quaternary structure, monomer.

The protein localises to the cytoplasm. The catalysed reaction is N(2)-formyl-N(1)-(5-phospho-beta-D-ribosyl)glycinamide + L-glutamine + ATP + H2O = 2-formamido-N(1)-(5-O-phospho-beta-D-ribosyl)acetamidine + L-glutamate + ADP + phosphate + H(+). Its pathway is purine metabolism; IMP biosynthesis via de novo pathway; 5-amino-1-(5-phospho-D-ribosyl)imidazole from N(2)-formyl-N(1)-(5-phospho-D-ribosyl)glycinamide: step 1/2. Phosphoribosylformylglycinamidine synthase involved in the purines biosynthetic pathway. Catalyzes the ATP-dependent conversion of formylglycinamide ribonucleotide (FGAR) and glutamine to yield formylglycinamidine ribonucleotide (FGAM) and glutamate. In Pseudomonas syringae pv. syringae (strain B728a), this protein is Phosphoribosylformylglycinamidine synthase.